Reading from the N-terminus, the 480-residue chain is Aspartyl/glutamyl-tRNA(Asn/Gln) amidotransferase subunit B (480 aa).

It belongs to the GatB/GatE family. GatB subfamily. In terms of assembly, heterotrimer of A, B and C subunits.

The enzyme catalyses L-glutamyl-tRNA(Gln) + L-glutamine + ATP + H2O = L-glutaminyl-tRNA(Gln) + L-glutamate + ADP + phosphate + H(+). The catalysed reaction is L-aspartyl-tRNA(Asn) + L-glutamine + ATP + H2O = L-asparaginyl-tRNA(Asn) + L-glutamate + ADP + phosphate + 2 H(+). Functionally, allows the formation of correctly charged Asn-tRNA(Asn) or Gln-tRNA(Gln) through the transamidation of misacylated Asp-tRNA(Asn) or Glu-tRNA(Gln) in organisms which lack either or both of asparaginyl-tRNA or glutaminyl-tRNA synthetases. The reaction takes place in the presence of glutamine and ATP through an activated phospho-Asp-tRNA(Asn) or phospho-Glu-tRNA(Gln). The sequence is that of Aspartyl/glutamyl-tRNA(Asn/Gln) amidotransferase subunit B from Caldicellulosiruptor saccharolyticus (strain ATCC 43494 / DSM 8903 / Tp8T 6331).